A 200-amino-acid polypeptide reads, in one-letter code: Dual specificity tyrosine-phosphorylation-regulated kinase 1A (200 aa).

Phosphotyrosine; by autocatalysis is present on tyrosine 41. Lysine 58 contributes to the ATP binding site. The residue at position 76 (tyrosine 76) is a Phosphotyrosine; by autocatalysis. Serine 88 is subject to Phosphoserine; by autocatalysis. Threonine 122 carries the post-translational modification Phosphothreonine; by autocatalysis.

Belongs to the protein kinase superfamily. CMGC Ser/Thr protein kinase family. MNB/DYRK subfamily. As to quaternary structure, interacts with RAD54L2/ARIP4. Interacts with CRY2. Interacts with RANBP9. Interacts with WDR68. Interacts with SIRT1. Post-translationally, can also autophosphorylate on serine and threonine residues (in vitro). Autophosphorylated on numerous tyrosine residues.

The protein localises to the nucleus. It catalyses the reaction L-tyrosyl-[protein] + ATP = O-phospho-L-tyrosyl-[protein] + ADP + H(+). It carries out the reaction L-seryl-[protein] + ATP = O-phospho-L-seryl-[protein] + ADP + H(+). The catalysed reaction is L-threonyl-[protein] + ATP = O-phospho-L-threonyl-[protein] + ADP + H(+). The enzyme catalyses [DNA-directed RNA polymerase] + ATP = phospho-[DNA-directed RNA polymerase] + ADP + H(+). Its activity is regulated as follows. Inhibited by RANBP9. Its function is as follows. Dual-specificity kinase which possesses both serine/threonine and tyrosine kinase activities. Exhibits a substrate preference for proline at position P+1 and arginine at position P-3. Plays an important role in double-strand breaks (DSBs) repair following DNA damage. Mechanistically, phosphorylates RNF169 and increases its ability to block accumulation of TP53BP1 at the DSB sites thereby promoting homologous recombination repair (HRR). Also acts as a positive regulator of transcription by acting as a CTD kinase that mediates phosphorylation of the CTD (C-terminal domain) of the large subunit of RNA polymerase II (RNAP II) POLR2A. May play a role in a signaling pathway regulating nuclear functions of cell proliferation. Modulates alternative splicing by phosphorylating the splice factor SRSF6. Has pro-survival function and negatively regulates the apoptotic process. Promotes cell survival upon genotoxic stress through phosphorylation of SIRT1. This in turn inhibits p53/TP53 activity and apoptosis. Phosphorylates SEPTIN4, SEPTIN5 and SF3B1 at 'Thr-434'. The chain is Dual specificity tyrosine-phosphorylation-regulated kinase 1A from Oryctolagus cuniculus (Rabbit).